The chain runs to 160 residues: Phosphopantetheine adenylyltransferase (160 aa).

Threonine 9 contributes to the substrate binding site. ATP-binding positions include 9 to 10 (TF) and histidine 17. Substrate is bound by residues lysine 41, leucine 73, and arginine 87. Residues 88-90 (GLR), glutamate 98, and 123-129 (YMFISAS) each bind ATP.

The protein belongs to the bacterial CoaD family. Homohexamer. The cofactor is Mg(2+).

Its subcellular location is the cytoplasm. It carries out the reaction (R)-4'-phosphopantetheine + ATP + H(+) = 3'-dephospho-CoA + diphosphate. It participates in cofactor biosynthesis; coenzyme A biosynthesis; CoA from (R)-pantothenate: step 4/5. Functionally, reversibly transfers an adenylyl group from ATP to 4'-phosphopantetheine, yielding dephospho-CoA (dPCoA) and pyrophosphate. This Thiobacillus denitrificans (strain ATCC 25259 / T1) protein is Phosphopantetheine adenylyltransferase.